Consider the following 179-residue polypeptide: Cytoglobin-2 (179 aa).

Acidic residues predominate over residues 1–11 (MEKEREDEETE). The interval 1-20 (MEKEREDEETEGRERPEPLT) is disordered. The Globin domain occupies 18–167 (PLTDVERGII…LYWHITGAYT (150 aa)). 2 residues coordinate heme b: His-81 and His-113.

Belongs to the globin family. In terms of assembly, monomeric. Expressed in all tissues examined, with highest levels in brain and eye, and considerably lower levels in skin, gut, heart, gill, liver and muscle.

It localises to the cytoplasm. The protein resides in the nucleus. It catalyses the reaction Fe(II)-heme b-[protein] + nitric oxide + O2 = Fe(III)-heme b-[protein] + nitrate. It carries out the reaction Fe(III)-heme b-[protein] + nitric oxide + H2O = Fe(II)-heme b-[protein] + nitrite + 2 H(+). The enzyme catalyses 2 superoxide + 2 H(+) = H2O2 + O2. The catalysed reaction is H2O2 + AH2 = A + 2 H2O. Functionally, probable multifunctional globin with a hexacoordinated heme iron required for the catalysis of various reactions depending on redox condition of the cell as well as oxygen availability. Has a nitric oxide dioxygenase (NOD) activity and is most probably involved in cell-mediated and oxygen-dependent nitric oxide consumption. Under normoxic conditions functions as a nitric oxide dioxygenase (NOD) but under hypoxic conditions the globin may switch its function to that of a nitrite (NO2) reductase (NiR), generating nitric oxide. Could also have peroxidase and superoxide dismutase activities, detoxifying reactive oxygen species and protecting cells against oxidative stress. Also binds dioxygen with low affinity and could function as an oxygen sensor but has probably no function as a respiratory oxygen carrier. This is Cytoglobin-2 from Danio rerio (Zebrafish).